A 144-amino-acid chain; its full sequence is Necrosis-inducing secreted protein 1 (144 aa).

The signal sequence occupies residues 1–19; it reads MQFRASIAAAAGLFALANA. N-linked (GlcNAc...) asparagine glycosylation is found at Asn88, Asn126, and Asn133. Residues 103–132 form a BAK1/SERK3-binding region; it reads QYVVAAGLYSLYGASSSPTLSHYNVTVTVG.

The protein belongs to the NIS1 effector family.

Its subcellular location is the secreted. The protein localises to the host cytoplasm. In terms of biological role, secreted effector that induces necrotic lesions in Nicotiana benthamiana. Interacts with the host receptor-like kinases (RLKs) BAK1/SERK3 and BKK1/SERK4, inhibits their kinase activity and suppresses INF1-induced pathogen-associated molecular pattern (PAMP)-triggered immunity (PTI) in N.benthamiana. Also interacts with the host receptor-like cytoplasmic kinase (RLCK) BIK1 and inhibits its kinase activity, thereby inhibiting PAMP-induced ROS generation. In PTI, phosphorylation relaying by RLKs and RLCKs is critical for the initiation of downstream signaling. The protein is Necrosis-inducing secreted protein 1 of Colletotrichum higginsianum (strain IMI 349063) (Crucifer anthracnose fungus).